Consider the following 289-residue polypeptide: 3-methyl-2-oxobutanoate hydroxymethyltransferase (289 aa).

Residues Asp50 and Asp89 each contribute to the Mg(2+) site. Residues Asp50–Ser51, Asp89, and Lys119 each bind 3-methyl-2-oxobutanoate. Glu121 lines the Mg(2+) pocket. Glu188 functions as the Proton acceptor in the catalytic mechanism. The segment at Ala266–Asp289 is disordered.

Belongs to the PanB family. In terms of assembly, homodecamer; pentamer of dimers. It depends on Mg(2+) as a cofactor.

It localises to the cytoplasm. It carries out the reaction 3-methyl-2-oxobutanoate + (6R)-5,10-methylene-5,6,7,8-tetrahydrofolate + H2O = 2-dehydropantoate + (6S)-5,6,7,8-tetrahydrofolate. Its pathway is cofactor biosynthesis; (R)-pantothenate biosynthesis; (R)-pantoate from 3-methyl-2-oxobutanoate: step 1/2. Its function is as follows. Catalyzes the reversible reaction in which hydroxymethyl group from 5,10-methylenetetrahydrofolate is transferred onto alpha-ketoisovalerate to form ketopantoate. The protein is 3-methyl-2-oxobutanoate hydroxymethyltransferase of Oleidesulfovibrio alaskensis (strain ATCC BAA-1058 / DSM 17464 / G20) (Desulfovibrio alaskensis).